We begin with the raw amino-acid sequence, 67 residues long: Large ribosomal subunit protein uL29 (67 aa).

It belongs to the universal ribosomal protein uL29 family.

The protein is Large ribosomal subunit protein uL29 of Sorangium cellulosum (strain So ce56) (Polyangium cellulosum (strain So ce56)).